Consider the following 430-residue polypeptide: Probable glucose-6-phosphate isomerase (430 aa).

Glutamate 271 serves as the catalytic Proton donor. Catalysis depends on residues histidine 292, histidine 303, and lysine 403.

Belongs to the GPI family.

It is found in the cytoplasm. The enzyme catalyses alpha-D-glucose 6-phosphate = beta-D-fructose 6-phosphate. The protein operates within carbohydrate biosynthesis; gluconeogenesis. It participates in carbohydrate degradation; glycolysis; D-glyceraldehyde 3-phosphate and glycerone phosphate from D-glucose: step 2/4. Catalyzes the reversible isomerization of glucose-6-phosphate to fructose-6-phosphate. The sequence is that of Probable glucose-6-phosphate isomerase from Haloquadratum walsbyi (strain DSM 16790 / HBSQ001).